The sequence spans 341 residues: Follistatin (341 aa).

Residues 1–29 (MLNERIQPGMIFLLTVSLCHFMEYRAVQA) form the signal peptide. In terms of domain architecture, TB spans 30-103 (GNCWLQQSKN…TCENVDCGPG (74 aa)). 8 cysteine pairs are disulfide-bonded: C32–C55, C42–C88, C56–C91, C95–C106, C100–C116, C118–C150, C122–C143, and C132–C164. The N-linked (GlcNAc...) asparagine glycan is linked to N72. Positions 94-117 (TCENVDCGPGKKCKMNKKNKPRCV) constitute a Follistatin-like 1 domain. 3 Kazal-like domains span residues 100-166 (CGPG…KCKK), 186-241 (NAYC…KCIK), and 264-318 (RGRC…SCNS). N-linked (GlcNAc...) asparagine glycosylation is present at N124. The Follistatin-like 2 domain occupies 167-190 (TCRDVLCPGSSSCVVDQTNNAYCV). Intrachain disulfides connect C192-C225, C196-C218, and C207-C239. The region spanning 244–268 (SCEDIQCSAGKKCLWDSRVGRGRCA) is the Follistatin-like 3 domain. Cystine bridges form between C270–C302, C274–C295, and C284–C316. N-linked (GlcNAc...) asparagine glycosylation is present at N288. Over residues 321–333 (EDTEEEEEEEEPD) the composition is skewed to acidic residues. The interval 321-341 (EDTEEEEEEEEPDYSFVISSW) is disordered.

Monomer. As to expression, spemann organizer and notochord.

The protein localises to the secreted. Binds directly to activin and functions as an activin antagonist which plays a role in neural induction. The short isoform is a more potent inhibitor of activin than the long isoform. Specific inhibitor of the biosynthesis and secretion of pituitary follicle stimulating hormone (FSH). This chain is Follistatin (fst), found in Xenopus laevis (African clawed frog).